The primary structure comprises 360 residues: D-xylose 1-dehydrogenase [NADP(+)] (360 aa).

The protein belongs to the Gfo/Idh/MocA family. Homotretramer.

The catalysed reaction is D-xylofuranose + NADP(+) = D-xylono-1,4-lactone + NADPH + H(+). Its function is as follows. NADP-dependent D-xylose dehydrogenase involved in the degradation of D-xylose, a major component of hemicelluloses such as xylan. In addition to D-xylose, oxidizes D-ribose at similar kinetic constants, whereas D-glucose is oxidized with about 70-fold lower catalytic efficiency. This chain is D-xylose 1-dehydrogenase [NADP(+)] (gfo6), found in Haloarcula marismortui (strain ATCC 43049 / DSM 3752 / JCM 8966 / VKM B-1809) (Halobacterium marismortui).